Here is a 197-residue protein sequence, read N- to C-terminus: Probable GTP-binding protein EngB (197 aa).

Positions 22 to 195 (KRIEIAFVGR…LKVLESVIDF (174 aa)) constitute an EngB-type G domain. Residues 30 to 37 (GRSNVGKS), 57 to 61 (GKTRL), 75 to 78 (DLPG), 142 to 145 (TKVD), and 174 to 176 (FSS) contribute to the GTP site. Mg(2+)-binding residues include Ser37 and Thr59.

Belongs to the TRAFAC class TrmE-Era-EngA-EngB-Septin-like GTPase superfamily. EngB GTPase family. Requires Mg(2+) as cofactor.

Its function is as follows. Necessary for normal cell division and for the maintenance of normal septation. The chain is Probable GTP-binding protein EngB from Clostridium kluyveri (strain ATCC 8527 / DSM 555 / NBRC 12016 / NCIMB 10680 / K1).